The sequence spans 447 residues: tRNA modification GTPase MnmE (447 aa).

The (6S)-5-formyl-5,6,7,8-tetrahydrofolate site is built by R22, E81, and K121. In terms of domain architecture, TrmE-type G spans 217-373 (GIVLAITGET…LMSEIVSYAE (157 aa)). N227 is a binding site for K(+). GTP contacts are provided by residues 227-232 (NTGKSS), 246-252 (SDIPGTT), and 271-274 (DTAG). Residue S231 coordinates Mg(2+). K(+)-binding residues include S246, I248, and T251. Mg(2+) is bound at residue T252. K447 provides a ligand contact to (6S)-5-formyl-5,6,7,8-tetrahydrofolate.

It belongs to the TRAFAC class TrmE-Era-EngA-EngB-Septin-like GTPase superfamily. TrmE GTPase family. In terms of assembly, homodimer. Heterotetramer of two MnmE and two MnmG subunits. K(+) serves as cofactor.

It is found in the cytoplasm. Functionally, exhibits a very high intrinsic GTPase hydrolysis rate. Involved in the addition of a carboxymethylaminomethyl (cmnm) group at the wobble position (U34) of certain tRNAs, forming tRNA-cmnm(5)s(2)U34. The polypeptide is tRNA modification GTPase MnmE (Orientia tsutsugamushi (strain Boryong) (Rickettsia tsutsugamushi)).